Here is a 285-residue protein sequence, read N- to C-terminus: NAD kinase (285 aa).

Asp66 functions as the Proton acceptor in the catalytic mechanism. Residues 66-67 (DG), 137-138 (ND), Arg148, Arg165, Asp167, and 178-183 (TAYSMS) contribute to the NAD(+) site.

It belongs to the NAD kinase family. A divalent metal cation is required as a cofactor.

It is found in the cytoplasm. The catalysed reaction is NAD(+) + ATP = ADP + NADP(+) + H(+). Involved in the regulation of the intracellular balance of NAD and NADP, and is a key enzyme in the biosynthesis of NADP. Catalyzes specifically the phosphorylation on 2'-hydroxyl of the adenosine moiety of NAD to yield NADP. The protein is NAD kinase of Chlorobium luteolum (strain DSM 273 / BCRC 81028 / 2530) (Pelodictyon luteolum).